Reading from the N-terminus, the 400-residue chain is Argininosuccinate synthase (400 aa).

9 to 17 (AYSGGLDTS) lines the ATP pocket. Tyr87 lines the L-citrulline pocket. Residue Gly117 coordinates ATP. Residues Thr119, Asn123, and Asp124 each coordinate L-aspartate. An L-citrulline-binding site is contributed by Asn123. Residues Arg127, Ser176, Ser185, Glu261, and Tyr273 each coordinate L-citrulline.

The protein belongs to the argininosuccinate synthase family. Type 1 subfamily. As to quaternary structure, homotetramer.

The protein localises to the cytoplasm. It catalyses the reaction L-citrulline + L-aspartate + ATP = 2-(N(omega)-L-arginino)succinate + AMP + diphosphate + H(+). Its pathway is amino-acid biosynthesis; L-arginine biosynthesis; L-arginine from L-ornithine and carbamoyl phosphate: step 2/3. This is Argininosuccinate synthase from Chlorobium phaeobacteroides (strain DSM 266 / SMG 266 / 2430).